Consider the following 229-residue polypeptide: Lipoprotein-releasing system ATP-binding protein LolD (229 aa).

Residues 7 to 229 (LKCKNVTKTY…KNGKLYKKNL (223 aa)) form the ABC transporter domain. 43 to 50 (GDSGSGKS) contributes to the ATP binding site.

Belongs to the ABC transporter superfamily. Lipoprotein translocase (TC 3.A.1.125) family. As to quaternary structure, the complex is composed of two ATP-binding proteins (LolD) and two transmembrane proteins (LolC and LolE).

Its subcellular location is the cell membrane. Part of the ABC transporter complex LolCDE involved in the translocation of lipoproteins, in an ATP-dependent manner. In Wigglesworthia glossinidia brevipalpis, this protein is Lipoprotein-releasing system ATP-binding protein LolD.